Reading from the N-terminus, the 397-residue chain is CCA-adding enzyme (397 aa).

Glycine 26 and arginine 29 together coordinate ATP. Residues glycine 26 and arginine 29 each contribute to the CTP site. 2 residues coordinate Mg(2+): aspartate 39 and aspartate 41. The ATP site is built by arginine 110, aspartate 153, arginine 156, arginine 159, and arginine 162. CTP-binding residues include arginine 110, aspartate 153, arginine 156, arginine 159, and arginine 162.

It belongs to the tRNA nucleotidyltransferase/poly(A) polymerase family. Bacterial CCA-adding enzyme type 3 subfamily. Homodimer. The cofactor is Mg(2+).

It carries out the reaction a tRNA precursor + 2 CTP + ATP = a tRNA with a 3' CCA end + 3 diphosphate. The catalysed reaction is a tRNA with a 3' CCA end + 2 CTP + ATP = a tRNA with a 3' CCACCA end + 3 diphosphate. In terms of biological role, catalyzes the addition and repair of the essential 3'-terminal CCA sequence in tRNAs without using a nucleic acid template. Adds these three nucleotides in the order of C, C, and A to the tRNA nucleotide-73, using CTP and ATP as substrates and producing inorganic pyrophosphate. tRNA 3'-terminal CCA addition is required both for tRNA processing and repair. Also involved in tRNA surveillance by mediating tandem CCA addition to generate a CCACCA at the 3' terminus of unstable tRNAs. While stable tRNAs receive only 3'-terminal CCA, unstable tRNAs are marked with CCACCA and rapidly degraded. This is CCA-adding enzyme from Bacillus cereus (strain G9842).